Consider the following 245-residue polypeptide: tRNA pseudouridine synthase A (245 aa).

Asp52 (nucleophile) is an active-site residue. Tyr110 contacts substrate.

This sequence belongs to the tRNA pseudouridine synthase TruA family. In terms of assembly, homodimer.

The catalysed reaction is uridine(38/39/40) in tRNA = pseudouridine(38/39/40) in tRNA. Its function is as follows. Formation of pseudouridine at positions 38, 39 and 40 in the anticodon stem and loop of transfer RNAs. This is tRNA pseudouridine synthase A from Borrelia duttonii (strain Ly).